The primary structure comprises 411 residues: C6 finger domain transcription factor hasA (411 aa).

Positions M1–S17 are enriched in polar residues. The tract at residues M1 to H21 is disordered. A DNA-binding region (zn(2)-C6 fungal-type) is located at residues C28–C54.

It is found in the nucleus. Its function is as follows. Transcription factor; part of the gene cluster that mediates the biosynthesis of hexadehydro-astechrome (HAS), a tryptophan-derived iron(III)-complex that acts as a virulence factor in infected mice. Positively regulates the expression of the HAS biosynthetic genes. In Aspergillus fumigatus (strain CBS 144.89 / FGSC A1163 / CEA10) (Neosartorya fumigata), this protein is C6 finger domain transcription factor hasA.